Reading from the N-terminus, the 321-residue chain is Phospho-N-acetylmuramoyl-pentapeptide-transferase (321 aa).

Transmembrane regions (helical) follow at residues 6–26 (ALIPIVSSCAMTIAAMPLFIG), 50–70 (GTPTMGGLVFLVAAILTGIWV), 82–102 (LFILLFVLALYGVIGFLDDFI), 118–138 (LLGQIIGGIIFYLVYRSEGYP), 143–163 (FFGIELPLGLFYGVFAIFWLV), 175–195 (IDGLVAGLGTISFATYGIIAW), 200–220 (YDVLVICLSVLGGLLGFFAYN), 226–246 (IFMGDVGSLALGGLLAAISIM), 251–271 (WTLLLVGLIYVMETASVMLQV), and 301–321 (IDIIFWLVSIVTSLITLWFIW).

This sequence belongs to the glycosyltransferase 4 family. MraY subfamily. Mg(2+) serves as cofactor.

It is found in the cell membrane. The enzyme catalyses UDP-N-acetyl-alpha-D-muramoyl-L-alanyl-gamma-D-glutamyl-L-lysyl-D-alanyl-D-alanine + di-trans,octa-cis-undecaprenyl phosphate = Mur2Ac(oyl-L-Ala-gamma-D-Glu-L-Lys-D-Ala-D-Ala)-di-trans,octa-cis-undecaprenyl diphosphate + UMP. It participates in cell wall biogenesis; peptidoglycan biosynthesis. Its function is as follows. Catalyzes the initial step of the lipid cycle reactions in the biosynthesis of the cell wall peptidoglycan: transfers peptidoglycan precursor phospho-MurNAc-pentapeptide from UDP-MurNAc-pentapeptide onto the lipid carrier undecaprenyl phosphate, yielding undecaprenyl-pyrophosphoryl-MurNAc-pentapeptide, known as lipid I. The chain is Phospho-N-acetylmuramoyl-pentapeptide-transferase from Enterococcus hirae.